The sequence spans 273 residues: Peptidoglycan-N-acetylglucosamine deacetylase BC_1974 (273 aa).

A helical transmembrane segment spans residues 10 to 30; that stretch reads IVVVLIAIAAVAIGYYMFQSI. In terms of domain architecture, NodB homology spans 69 to 255; it reads KVAYLTFDDG…GLKEKGYEFE (187 aa). The active-site Proton acceptor is Asp76. Zn(2+) is bound by residues Asp77, His126, and His130. The active-site Proton donor is the His230.

This sequence belongs to the polysaccharide deacetylase family. Zn(2+) serves as cofactor. Requires Co(2+) as cofactor. The cofactor is Ni(2+).

It localises to the cell membrane. The enzyme catalyses peptidoglycan-N-acetyl-D-glucosamine + H2O = peptidoglycan-D-glucosamine + acetate.. Its activity is regulated as follows. Inhibited by the hydroxamate N-hydroxy-4-(naphthalene-1-yl)benzamide (NHNB). Its function is as follows. Catalyzes the deacetylation of N-acetylglucosamine (GlcNAc) residues in peptidoglycan. This is Peptidoglycan-N-acetylglucosamine deacetylase BC_1974 from Bacillus cereus (strain ATCC 14579 / DSM 31 / CCUG 7414 / JCM 2152 / NBRC 15305 / NCIMB 9373 / NCTC 2599 / NRRL B-3711).